The following is a 278-amino-acid chain: UPF0276 protein Swit_4400 (278 aa).

Belongs to the UPF0276 family.

The polypeptide is UPF0276 protein Swit_4400 (Rhizorhabdus wittichii (strain DSM 6014 / CCUG 31198 / JCM 15750 / NBRC 105917 / EY 4224 / RW1) (Sphingomonas wittichii)).